Here is a 109-residue protein sequence, read N- to C-terminus: Fluoride-specific ion channel FluC (109 aa).

3 consecutive transmembrane segments (helical) span residues 21–41 (FFLN…GFVI), 52–72 (ILLT…LFLY), and 83–103 (LFFY…AGFL).

This sequence belongs to the fluoride channel Fluc/FEX (TC 1.A.43) family.

The protein resides in the cell inner membrane. It catalyses the reaction fluoride(in) = fluoride(out). Its function is as follows. Fluoride-specific ion channel. Important for reducing fluoride concentration in the cell, thus reducing its toxicity. This chain is Fluoride-specific ion channel FluC, found in Prochlorococcus marinus (strain MIT 9515).